Here is a 639-residue protein sequence, read N- to C-terminus: Polyvinylalcohol dehydrogenase (639 aa).

An N-terminal signal peptide occupies residues 1 to 33 (MQQNIERNQVSMTTSRFVWGAVMALVALGSASA). Positions 36-152 (LNLPDGAALY…TPDQWNGWGA (117 aa)) constitute a Cytochrome c domain. Positions 49, 52, and 53 each coordinate heme.

It belongs to the bacterial PQQ dehydrogenase family. As to quaternary structure, monomer. Pyrroloquinoline quinone is required as a cofactor.

It is found in the cytoplasm. It carries out the reaction a polyvinyl alcohol + 2n Fe(III)-[cytochrome c] = an oxidized polyvinyl alcohol + 2n Fe(II)-[cytochrome c] + 2n H(+). Functionally, catalyzes the oxidation of polyvinyl alcohol (PVA) in the polyvinyl alcohol degradation pathway. The protein is Polyvinylalcohol dehydrogenase (pvaA) of Pseudomonas sp.